Here is a 64-residue protein sequence, read N- to C-terminus: Large ribosomal subunit protein bL35 (64 aa).

Positions 1 to 54 are disordered; that stretch reads MPKIKSNSGAAKRFKKTAHGFKHKQSFRSHILTKKSTKRKRQLRGMKQIHDADK. Positions 12-44 are enriched in basic residues; it reads KRFKKTAHGFKHKQSFRSHILTKKSTKRKRQLR.

It belongs to the bacterial ribosomal protein bL35 family.

This chain is Large ribosomal subunit protein bL35, found in Chromohalobacter salexigens (strain ATCC BAA-138 / DSM 3043 / CIP 106854 / NCIMB 13768 / 1H11).